Reading from the N-terminus, the 60-residue chain is MWRWSNIYRIGTLSRYYRYAEHSKDTTMSIFSGGVLPNTPSLEKSLYYDAFPYGLTCKNS.

This is an uncharacterized protein from Dryophytes versicolor (chameleon treefrog).